The primary structure comprises 670 residues: Acetyl-coenzyme A synthetase (670 aa).

Residues 205–208 (RRGR) and T326 contribute to the CoA site. Residues 402–404 (GEP), 426–431 (STWWMT), D517, R532, and R543 each bind ATP. 2 residues coordinate Mg(2+): H556 and V559. R601 lines the CoA pocket. Position 626 is an N6-acetyllysine (K626).

Belongs to the ATP-dependent AMP-binding enzyme family. The cofactor is Mg(2+). Post-translationally, acetylated. Deacetylation by the SIR2-homolog deacetylase activates the enzyme.

The catalysed reaction is acetate + ATP + CoA = acetyl-CoA + AMP + diphosphate. Functionally, catalyzes the conversion of acetate into acetyl-CoA (AcCoA), an essential intermediate at the junction of anabolic and catabolic pathways. AcsA undergoes a two-step reaction. In the first half reaction, AcsA combines acetate with ATP to form acetyl-adenylate (AcAMP) intermediate. In the second half reaction, it can then transfer the acetyl group from AcAMP to the sulfhydryl group of CoA, forming the product AcCoA. The polypeptide is Acetyl-coenzyme A synthetase (Pyrobaculum aerophilum (strain ATCC 51768 / DSM 7523 / JCM 9630 / CIP 104966 / NBRC 100827 / IM2)).